We begin with the raw amino-acid sequence, 131 residues long: Large ribosomal subunit protein bL17 (131 aa).

This sequence belongs to the bacterial ribosomal protein bL17 family. In terms of assembly, part of the 50S ribosomal subunit. Contacts protein L32.

In Shewanella frigidimarina (strain NCIMB 400), this protein is Large ribosomal subunit protein bL17.